The sequence spans 597 residues: MDHIRNFSIIAHIDHGKSTLADRIIQICGGLSDREMESQVLDSMDLERERGITIKAQTAALTYKARNGEVYNLNMIDTPGHVDFSYEVSRSLSACEGALLVVDASQGVEAQTVANCYTAIELGVDVIPVLNKIDLPAANPENAIAEIEDVIGIDATDATHCSAKTGLGVEDVLEALVAKVPPPKGDPEAPLQALIIDSWFDNYVGVVMLVRIVNGTLRPKDKIRMMATGAQYPVEHVGVFTPKSKNLESLSAGQVGFIIAGIKELAAAKVGDTVTLVNRPAPEPLPGFKEVKPQVFAGLYPVEANQYDALRDSLEKLKLNDASLMYEPEVSQALGFGFRCGFLGLLHMEIVQERLEREFDMDLITTAPTVVYEVLQRDGTTIMVENPAKMPEPSKIEEVREPIVTVNLYMPQDYVGSVITLCTQKRGTQINMQYHGRQVQLTYEIPMGEVVLDFFDRLKSISRGYASMDYEFKEYRAADVVKVDMLINGDKVDALSVIVHRSQSQYRGREVAAKMRELIPRQMYDVAIQATIGANIIARENIKALRKNVLAKCYGGDISRKKKLLEKQKAGKKRMKQVGSVEIPQEAFLAILRVEDK.

A tr-type G domain is found at 2–184 (DHIRNFSIIA…ALVAKVPPPK (183 aa)). GTP contacts are provided by residues 14 to 19 (DHGKST) and 131 to 134 (NKID).

This sequence belongs to the TRAFAC class translation factor GTPase superfamily. Classic translation factor GTPase family. LepA subfamily.

It localises to the cell inner membrane. The enzyme catalyses GTP + H2O = GDP + phosphate + H(+). In terms of biological role, required for accurate and efficient protein synthesis under certain stress conditions. May act as a fidelity factor of the translation reaction, by catalyzing a one-codon backward translocation of tRNAs on improperly translocated ribosomes. Back-translocation proceeds from a post-translocation (POST) complex to a pre-translocation (PRE) complex, thus giving elongation factor G a second chance to translocate the tRNAs correctly. Binds to ribosomes in a GTP-dependent manner. This Paraburkholderia phytofirmans (strain DSM 17436 / LMG 22146 / PsJN) (Burkholderia phytofirmans) protein is Elongation factor 4.